A 604-amino-acid polypeptide reads, in one-letter code: Integrin alpha-IIb (604 aa).

One copy of the FG-GAP repeat lies at 1-61; that stretch reads QVLDSPFPTG…ASVQLLVQDS (61 aa). The Extracellular portion of the chain corresponds to 1–558; the sequence is QVLDSPFPTG…TQLLRALEER (558 aa). Aspartate 22, aspartate 24, asparagine 26, tyrosine 28, and aspartate 30 together coordinate Ca(2+). Disulfide bonds link cysteine 69–cysteine 80 and cysteine 86–cysteine 141. Asparagine 166 carries an N-linked (GlcNAc...) asparagine glycan. Disulfide bonds link cysteine 198–cysteine 204, cysteine 270–cysteine 283, cysteine 422–cysteine 486, and cysteine 476–cysteine 481. N-linked (GlcNAc...) asparagine glycosylation occurs at asparagine 276. A glycan (N-linked (GlcNAc...) asparagine) is linked at asparagine 527. Residues 559–584 traverse the membrane as a helical segment; sequence AIPIWWVLVGVLGGLLLLTILVLAMW. At 585-604 the chain is on the cytoplasmic side; that stretch reads KVGFFKRNRPPLEEDDEEGE. The short motif at 587–591 is the GFFKR motif element; that stretch reads GFFKR.

Belongs to the integrin alpha chain family. Heterodimer of an alpha and a beta subunit. The alpha subunit is composed of a heavy and a light chain linked by a disulfide bond. Alpha-IIb associates with beta-3. Directly interacts with RNF181. Interacts (via C-terminus cytoplasmic tail region) with CIB1; the interaction is direct and calcium-dependent. Interacts (via C-terminus cytoplasmic tail region) with CIB2, CIB3 and CIB4; the interactions are stabilized/increased in a calcium and magnesium-dependent manner. ITGA2B:ITGB3 interacts with PPIA/CYPA; the interaction is ROS and PPIase activity-dependent and is increased in the presence of thrombin. ITGA2B:ITGB3 interacts with SELP (via C-type lectin domain); the interaction mediates cell-cell interaction and adhesion.

It is found in the membrane. In terms of biological role, integrin alpha-IIb/beta-3 is a receptor for fibronectin, fibrinogen, plasminogen, prothrombin, thrombospondin and vitronectin. It recognizes the sequence R-G-D in a wide array of ligands. It recognizes the sequence H-H-L-G-G-G-A-K-Q-A-G-D-V in fibrinogen gamma chain. Following activation integrin alpha-IIb/beta-3 brings about platelet/platelet interaction through binding of soluble fibrinogen. This step leads to rapid platelet aggregation which physically plugs ruptured endothelial cell surface. In Papio cynocephalus (Yellow baboon), this protein is Integrin alpha-IIb (ITGA2B).